The sequence spans 399 residues: Probable 2,3-bisphosphoglycerate-independent phosphoglycerate mutase (399 aa).

It belongs to the BPG-independent phosphoglycerate mutase family. A-PGAM subfamily.

The enzyme catalyses (2R)-2-phosphoglycerate = (2R)-3-phosphoglycerate. It participates in carbohydrate degradation; glycolysis; pyruvate from D-glyceraldehyde 3-phosphate: step 3/5. In terms of biological role, catalyzes the interconversion of 2-phosphoglycerate and 3-phosphoglycerate. This is Probable 2,3-bisphosphoglycerate-independent phosphoglycerate mutase from Geobacter sulfurreducens (strain ATCC 51573 / DSM 12127 / PCA).